Here is a 597-residue protein sequence, read N- to C-terminus: Elongation factor 4 (597 aa).

The 183-residue stretch at 2 to 184 (DHIRNFSIIA…ALIAKVPPPK (183 aa)) folds into the tr-type G domain. GTP contacts are provided by residues 14–19 (DHGKST) and 131–134 (NKID).

The protein belongs to the TRAFAC class translation factor GTPase superfamily. Classic translation factor GTPase family. LepA subfamily.

The protein resides in the cell inner membrane. It catalyses the reaction GTP + H2O = GDP + phosphate + H(+). Its function is as follows. Required for accurate and efficient protein synthesis under certain stress conditions. May act as a fidelity factor of the translation reaction, by catalyzing a one-codon backward translocation of tRNAs on improperly translocated ribosomes. Back-translocation proceeds from a post-translocation (POST) complex to a pre-translocation (PRE) complex, thus giving elongation factor G a second chance to translocate the tRNAs correctly. Binds to ribosomes in a GTP-dependent manner. The polypeptide is Elongation factor 4 (Paraburkholderia phymatum (strain DSM 17167 / CIP 108236 / LMG 21445 / STM815) (Burkholderia phymatum)).